A 286-amino-acid polypeptide reads, in one-letter code: 4-hydroxybenzoate octaprenyltransferase (286 aa).

Helical transmembrane passes span 22–42 (IGTL…EKAM), 45–65 (LSVL…GCVI), 98–118 (LFIV…LYTI), 143–163 (FFLG…TIEA), 213–233 (IIAL…YLSQ), 238–255 (YFIV…QCRL), and 266–286 (NAFL…LFGI).

It belongs to the UbiA prenyltransferase family. Requires Mg(2+) as cofactor.

The protein localises to the cell inner membrane. It catalyses the reaction all-trans-octaprenyl diphosphate + 4-hydroxybenzoate = 4-hydroxy-3-(all-trans-octaprenyl)benzoate + diphosphate. It functions in the pathway cofactor biosynthesis; ubiquinone biosynthesis. Catalyzes the prenylation of para-hydroxybenzoate (PHB) with an all-trans polyprenyl group. Mediates the second step in the final reaction sequence of ubiquinone-8 (UQ-8) biosynthesis, which is the condensation of the polyisoprenoid side chain with PHB, generating the first membrane-bound Q intermediate 3-octaprenyl-4-hydroxybenzoate. This chain is 4-hydroxybenzoate octaprenyltransferase, found in Histophilus somni (strain 2336) (Haemophilus somnus).